We begin with the raw amino-acid sequence, 278 residues long: Gap junction delta-3 protein (278 aa).

Residues 1–24 lie on the Cytoplasmic side of the membrane; the sequence is MGEWAFLGSLLDAVQLQSPLVGRL. The chain crosses the membrane as a helical span at residues 25 to 45; the sequence is WLVIMLIFRILVLATVGGAVF. At 46–76 the chain is on the extracellular side; sequence EDEQEEFVCNTLQPGCRQTCYDRAFPVSHYR. A helical membrane pass occupies residues 77 to 97; it reads FWLFHILLLSAPPVLFVIYSM. Over 98-136 the chain is Cytoplasmic; it reads HQASKEAGGAQLAPPCARGRAEAPCSPCALRARRARRCY. A helical transmembrane segment spans residues 137 to 157; that stretch reads LLSVALRLLAELAFLGGQALL. Residues 158–188 are Extracellular-facing; that stretch reads YGFRVDPHYACAGPPCPHTVDCFVSRPTEKT. Residues 189–209 form a helical membrane-spanning segment; sequence VFVVFYFAVGLLSALLSVAEL. Topologically, residues 210 to 278 are cytoplasmic; that stretch reads GHLLWKGRQR…LATVRQDLAI (69 aa). Residues 223–278 form a disordered region; that stretch reads LPPPPPSPSLPSQRGDPDPFGPPAYAHRSPAGDSEGEGGSGHSKASLATVRQDLAI.

It belongs to the connexin family. Delta-type subfamily. A connexon is composed of a hexamer of connexins.

The protein localises to the cell membrane. Its subcellular location is the cell junction. The protein resides in the gap junction. Its function is as follows. One gap junction consists of a cluster of closely packed pairs of transmembrane channels, the connexons, through which materials of low MW diffuse from one cell to a neighboring cell. This chain is Gap junction delta-3 protein (Gjd3), found in Mus musculus (Mouse).